Consider the following 380-residue polypeptide: Succinate--CoA ligase [ADP-forming] subunit beta (380 aa).

The region spanning 9–236 (KGVFADAGIP…EAAGDELEAK (228 aa)) is the ATP-grasp domain. Residues Lys-45, 52 to 54 (GRG), Glu-91, Val-94, and Glu-99 contribute to the ATP site. Asn-191 and Asp-205 together coordinate Mg(2+). Residues Asn-256 and 313–315 (GIT) contribute to the substrate site.

The protein belongs to the succinate/malate CoA ligase beta subunit family. Heterotetramer of two alpha and two beta subunits. Requires Mg(2+) as cofactor.

It catalyses the reaction succinate + ATP + CoA = succinyl-CoA + ADP + phosphate. The catalysed reaction is GTP + succinate + CoA = succinyl-CoA + GDP + phosphate. Its pathway is carbohydrate metabolism; tricarboxylic acid cycle; succinate from succinyl-CoA (ligase route): step 1/1. In terms of biological role, succinyl-CoA synthetase functions in the citric acid cycle (TCA), coupling the hydrolysis of succinyl-CoA to the synthesis of either ATP or GTP and thus represents the only step of substrate-level phosphorylation in the TCA. The beta subunit provides nucleotide specificity of the enzyme and binds the substrate succinate, while the binding sites for coenzyme A and phosphate are found in the alpha subunit. The chain is Succinate--CoA ligase [ADP-forming] subunit beta from Natronomonas pharaonis (strain ATCC 35678 / DSM 2160 / CIP 103997 / JCM 8858 / NBRC 14720 / NCIMB 2260 / Gabara) (Halobacterium pharaonis).